Reading from the N-terminus, the 444-residue chain is Tubulin gamma chain (444 aa).

144-150 (SGGTGSG) is a GTP binding site.

Belongs to the tubulin family.

It localises to the cytoplasm. The protein resides in the cytoskeleton. The protein localises to the microtubule organizing center. It is found in the centrosome. Its subcellular location is the cell junction. It localises to the hemidesmosome. The protein resides in the adherens junction. Its function is as follows. Tubulin is the major constituent of microtubules. The gamma chain is found at microtubule organizing centers (MTOC) such as the spindle poles or the centrosome, suggesting that it is involved in the minus-end nucleation of microtubule assembly. The chain is Tubulin gamma chain (tbg-1) from Caenorhabditis elegans.